We begin with the raw amino-acid sequence, 209 residues long: Thiamine-phosphate synthase 1 (209 aa).

4-amino-2-methyl-5-(diphosphooxymethyl)pyrimidine is bound by residues 39 to 43 (QFREK) and Asn74. Mg(2+)-binding residues include Asp75 and Asp94. Position 112 (Ser112) interacts with 4-amino-2-methyl-5-(diphosphooxymethyl)pyrimidine. 2-[(2R,5Z)-2-carboxy-4-methylthiazol-5(2H)-ylidene]ethyl phosphate is bound at residue 138–140 (TQS). 4-amino-2-methyl-5-(diphosphooxymethyl)pyrimidine is bound at residue Lys141. Residues Gly170 and 190 to 191 (IS) contribute to the 2-[(2R,5Z)-2-carboxy-4-methylthiazol-5(2H)-ylidene]ethyl phosphate site.

The protein belongs to the thiamine-phosphate synthase family. The cofactor is Mg(2+).

It carries out the reaction 2-[(2R,5Z)-2-carboxy-4-methylthiazol-5(2H)-ylidene]ethyl phosphate + 4-amino-2-methyl-5-(diphosphooxymethyl)pyrimidine + 2 H(+) = thiamine phosphate + CO2 + diphosphate. It catalyses the reaction 2-(2-carboxy-4-methylthiazol-5-yl)ethyl phosphate + 4-amino-2-methyl-5-(diphosphooxymethyl)pyrimidine + 2 H(+) = thiamine phosphate + CO2 + diphosphate. The catalysed reaction is 4-methyl-5-(2-phosphooxyethyl)-thiazole + 4-amino-2-methyl-5-(diphosphooxymethyl)pyrimidine + H(+) = thiamine phosphate + diphosphate. The protein operates within cofactor biosynthesis; thiamine diphosphate biosynthesis; thiamine phosphate from 4-amino-2-methyl-5-diphosphomethylpyrimidine and 4-methyl-5-(2-phosphoethyl)-thiazole: step 1/1. Condenses 4-methyl-5-(beta-hydroxyethyl)thiazole monophosphate (THZ-P) and 2-methyl-4-amino-5-hydroxymethyl pyrimidine pyrophosphate (HMP-PP) to form thiamine monophosphate (TMP). The sequence is that of Thiamine-phosphate synthase 1 from Streptococcus pneumoniae (strain ATCC BAA-255 / R6).